Reading from the N-terminus, the 602-residue chain is Arp2/3 complex-activating protein rickA (602 aa).

Disordered regions lie at residues 307-484, 516-535, and 555-602; these read SSLA…AGPK, VEFDPNTGKPVAHSHSKPVQ, and MSDS…SFVK. Residues 318–442 are compositionally biased toward pro residues; the sequence is TPPPPLPGNN…IPPPPPPPMA (125 aa). WH2 domains are found at residues 472-489 and 499-516; these read DTSDLMREIAGPKKLRKV and SRDLLLQSIRGEHKLKKV. Positions 475–484 are enriched in basic and acidic residues; the sequence is DLMREIAGPK. Positions 537-570 are central and acidic domains; it reads VNKLSGVASILARRVVMEMSDSSGSESDSGNWSD. Low complexity predominate over residues 555–566; sequence MSDSSGSESDSG. Residues 578–590 are compositionally biased toward basic residues; the sequence is KTLKTKRERRKIL. The segment covering 591-602 has biased composition (polar residues); sequence NNRNSQKPSFVK.

Homodimer.

The protein localises to the cell surface. Its function is as follows. Recruits and activates the Arp2/3 complex, which in turn leads to actin polymerization, promoting Rickettsia motility during infection. This is Arp2/3 complex-activating protein rickA (rickA) from Rickettsia montanensis.